A 513-amino-acid polypeptide reads, in one-letter code: GMP synthase [glutamine-hydrolyzing] (513 aa).

Residues Thr-3 to Asn-192 enclose the Glutamine amidotransferase type-1 domain. Cys-80 serves as the catalytic Nucleophile. Residues His-166 and Glu-168 contribute to the active site. The GMPS ATP-PPase domain occupies Trp-193–Arg-388. Ser-220–Ser-226 lines the ATP pocket.

Homodimer.

The catalysed reaction is XMP + L-glutamine + ATP + H2O = GMP + L-glutamate + AMP + diphosphate + 2 H(+). It participates in purine metabolism; GMP biosynthesis; GMP from XMP (L-Gln route): step 1/1. Functionally, catalyzes the synthesis of GMP from XMP. This is GMP synthase [glutamine-hydrolyzing] from Thermosipho africanus (strain TCF52B).